Consider the following 217-residue polypeptide: Endo-1,4-beta-xylanase (217 aa).

The first 17 residues, 1–17 (MQFLIPVVILCVSLVDS), serve as a signal peptide directing secretion. Positions 20–217 (VLYNNEIGFN…SSGFADITVS (198 aa)) constitute a GH11 domain. Asn-56 and Asn-80 each carry an N-linked (GlcNAc...) asparagine glycan. The active-site Nucleophile is Glu-107. Glu-204 acts as the Proton donor in catalysis.

It belongs to the glycosyl hydrolase 11 (cellulase G) family. As to expression, expressed in larval carcasses and gut, and adult gut.

It is found in the secreted. It catalyses the reaction Endohydrolysis of (1-&gt;4)-beta-D-xylosidic linkages in xylans.. It functions in the pathway glycan degradation; xylan degradation. The chain is Endo-1,4-beta-xylanase from Phaedon cochleariae (Mustard beetle).